The following is a 177-amino-acid chain: Acireductone dioxygenase (177 aa).

Residues 1 to 23 (MVRAWYMDDSDADQRAPHMTDPP) are disordered. Fe(2+)-binding residues include H86, H88, E92, and H131. H86, H88, E92, and H131 together coordinate Ni(2+).

This sequence belongs to the acireductone dioxygenase (ARD) family. Requires Fe(2+) as cofactor. It depends on Ni(2+) as a cofactor.

The protein resides in the cytoplasm. It localises to the nucleus. It catalyses the reaction 1,2-dihydroxy-5-(methylsulfanyl)pent-1-en-3-one + O2 = 4-methylsulfanyl-2-oxobutanoate + formate + 2 H(+). It carries out the reaction 1,2-dihydroxy-5-(methylsulfanyl)pent-1-en-3-one + O2 = 3-(methylsulfanyl)propanoate + CO + formate + 2 H(+). Its pathway is amino-acid biosynthesis; L-methionine biosynthesis via salvage pathway; L-methionine from S-methyl-5-thio-alpha-D-ribose 1-phosphate: step 5/6. In terms of biological role, catalyzes 2 different reactions between oxygen and the acireductone 1,2-dihydroxy-3-keto-5-methylthiopentene (DHK-MTPene) depending upon the metal bound in the active site. Fe-containing acireductone dioxygenase (Fe-ARD) produces formate and 2-keto-4-methylthiobutyrate (KMTB), the alpha-ketoacid precursor of methionine in the methionine recycle pathway. Ni-containing acireductone dioxygenase (Ni-ARD) produces methylthiopropionate, carbon monoxide and formate, and does not lie on the methionine recycle pathway. The protein is Acireductone dioxygenase of Branchiostoma floridae (Florida lancelet).